Consider the following 316-residue polypeptide: Sulfate adenylyltransferase subunit 2 (316 aa).

The tract at residues 297–316 (RAIDRDQSGSMEKKKREGYF) is disordered.

It belongs to the PAPS reductase family. CysD subfamily. In terms of assembly, heterodimer composed of CysD, the smaller subunit, and CysN.

The enzyme catalyses sulfate + ATP + H(+) = adenosine 5'-phosphosulfate + diphosphate. The protein operates within sulfur metabolism; hydrogen sulfide biosynthesis; sulfite from sulfate: step 1/3. Functionally, with CysN forms the ATP sulfurylase (ATPS) that catalyzes the adenylation of sulfate producing adenosine 5'-phosphosulfate (APS) and diphosphate, the first enzymatic step in sulfur assimilation pathway. APS synthesis involves the formation of a high-energy phosphoric-sulfuric acid anhydride bond driven by GTP hydrolysis by CysN coupled to ATP hydrolysis by CysD. This chain is Sulfate adenylyltransferase subunit 2, found in Allorhizobium ampelinum (strain ATCC BAA-846 / DSM 112012 / S4) (Agrobacterium vitis (strain S4)).